Here is a 77-residue protein sequence, read N- to C-terminus: Large ribosomal subunit protein uL24 (77 aa).

It belongs to the universal ribosomal protein uL24 family. In terms of assembly, part of the 50S ribosomal subunit.

Functionally, one of two assembly initiator proteins, it binds directly to the 5'-end of the 23S rRNA, where it nucleates assembly of the 50S subunit. In terms of biological role, one of the proteins that surrounds the polypeptide exit tunnel on the outside of the subunit. The protein is Large ribosomal subunit protein uL24 of Campylobacter jejuni subsp. doylei (strain ATCC BAA-1458 / RM4099 / 269.97).